The following is a 197-amino-acid chain: MSDPDVFKILLIGDSAVGKTSLLLRFADNSFQETSVNMTSVDYKNKNIVIDGRTFNLQIWDTAGQERFRTITSSFYRGAHGVLVCYDVTDQLTYNNVRLWMQEIQRYAVLGVSRVLVGNKCDLEDRKLVNTSIAREYADSLGIPFMEASAATGVNVEEAFMAMANEIYRNHMGGSKPSVVNPGSGGTSNTGGKKKFC.

GTP-binding positions include 13 to 20 (GDSAVGKT), 61 to 65 (DTAGQ), and 119 to 122 (NKCD). A disordered region spans residues 175–197 (SKPSVVNPGSGGTSNTGGKKKFC). A lipid anchor (S-geranylgeranyl cysteine) is attached at C197.

The protein belongs to the small GTPase superfamily. Rab family.

Its subcellular location is the cell membrane. In Dictyostelium discoideum (Social amoeba), this protein is Ras-related protein RabG2 (rabG2).